A 122-amino-acid polypeptide reads, in one-letter code: Small ribosomal subunit protein uS12cz/uS12cy (122 aa).

The protein belongs to the universal ribosomal protein uS12 family. In terms of assembly, part of the 30S ribosomal subunit.

Its subcellular location is the plastid. The protein localises to the chloroplast. Its function is as follows. With S4 and S5 plays an important role in translational accuracy. Located at the interface of the 30S and 50S subunits. The polypeptide is Small ribosomal subunit protein uS12cz/uS12cy (rps12-A) (Triticum aestivum (Wheat)).